The primary structure comprises 208 residues: MIVIIDYDTGNTKSISKALDFIGLQNKISSDATEISQADGVILPGVGAYPEAMKELTRRGLNKTLKEIAAGGKPILGVCLGMQLLLESSNEHSFTNGLGLIPGHVEKLPEDPEFAVPHMGWNQLQIKRATPLTKQLDGEYVYYVHSYYANCPEEYIIATSGYSIEVPGMINKGNIYGAQFHPEKSGQIGLEILKGFKEVTYSCKSSQQ.

In terms of domain architecture, Glutamine amidotransferase type-1 spans 1–206 (MIVIIDYDTG…KEVTYSCKSS (206 aa)). Catalysis depends on Cys-79, which acts as the Nucleophile. Residues His-181 and Glu-183 contribute to the active site.

Heterodimer of HisH and HisF.

It is found in the cytoplasm. It carries out the reaction 5-[(5-phospho-1-deoxy-D-ribulos-1-ylimino)methylamino]-1-(5-phospho-beta-D-ribosyl)imidazole-4-carboxamide + L-glutamine = D-erythro-1-(imidazol-4-yl)glycerol 3-phosphate + 5-amino-1-(5-phospho-beta-D-ribosyl)imidazole-4-carboxamide + L-glutamate + H(+). The catalysed reaction is L-glutamine + H2O = L-glutamate + NH4(+). It functions in the pathway amino-acid biosynthesis; L-histidine biosynthesis; L-histidine from 5-phospho-alpha-D-ribose 1-diphosphate: step 5/9. Functionally, IGPS catalyzes the conversion of PRFAR and glutamine to IGP, AICAR and glutamate. The HisH subunit catalyzes the hydrolysis of glutamine to glutamate and ammonia as part of the synthesis of IGP and AICAR. The resulting ammonia molecule is channeled to the active site of HisF. The polypeptide is Imidazole glycerol phosphate synthase subunit HisH (Listeria monocytogenes serovar 1/2a (strain ATCC BAA-679 / EGD-e)).